We begin with the raw amino-acid sequence, 329 residues long: Beta-ribofuranosylphenol 5'-phosphate synthase (329 aa).

It belongs to the beta-RFA-P synthase family. In terms of assembly, homodimer. The cofactor is Mg(2+).

The catalysed reaction is 5-phospho-alpha-D-ribose 1-diphosphate + 4-hydroxybenzoate + H(+) = 4-(beta-D-ribofuranosyl)phenol 5'-phosphate + CO2 + diphosphate. It catalyses the reaction 4-aminobenzoate + 5-phospho-alpha-D-ribose 1-diphosphate + H(+) = 4-(beta-D-ribofuranosyl)aminobenzene 5'-phosphate + CO2 + diphosphate. The protein operates within cofactor biosynthesis; 5,6,7,8-tetrahydromethanopterin biosynthesis. Its function is as follows. Catalyzes the condensation of 4-hydroxybenzoate (HB) with 5-phospho-alpha-D-ribose 1-diphosphate (PRPP) to produce beta-ribofuranosylphenol 5'-phosphate (beta-RFH-P). Also catalyzes the condensation of 4-aminobenzoate (pABA) with PRPP to produce beta-ribofuranosylaminobenzene 5'-phosphate (beta-RFA-P). Only 4-hydroxybenzoate is known to be biosynthesized by methanogenic archaea, but 4-aminobenzoate can be used as substrate by growing methanogens when it is present in the growth medium. The protein is Beta-ribofuranosylphenol 5'-phosphate synthase of Methanothermobacter thermautotrophicus (strain ATCC 29096 / DSM 1053 / JCM 10044 / NBRC 100330 / Delta H) (Methanobacterium thermoautotrophicum).